A 130-amino-acid chain; its full sequence is Large ribosomal subunit protein bL17 (130 aa).

Belongs to the bacterial ribosomal protein bL17 family. As to quaternary structure, part of the 50S ribosomal subunit. Contacts protein L32.

The protein is Large ribosomal subunit protein bL17 of Shewanella halifaxensis (strain HAW-EB4).